The sequence spans 372 residues: GDP-mannose 4,6 dehydratase (372 aa).

Residues 1–22 are disordered; it reads MAHAPASCPSSRNSGDGDKGKP. A2 carries the N-acetylalanine modification. NADP(+) contacts are provided by residues 30–35, 55–58, 86–87, 108–112, and Y123; these read GITGQD, RRSS, DL, and LGAQS. T155 is a catalytic residue. Catalysis depends on nucleophile residues E157 and Y179. The NADP(+) site is built by K183, H209, and R214. Y323 bears the Phosphotyrosine mark.

Belongs to the NAD(P)-dependent epimerase/dehydratase family. GDP-mannose 4,6-dehydratase subfamily. NADP(+) serves as cofactor.

The enzyme catalyses GDP-alpha-D-mannose = GDP-4-dehydro-alpha-D-rhamnose + H2O. The protein operates within nucleotide-sugar biosynthesis; GDP-L-fucose biosynthesis via de novo pathway; GDP-L-fucose from GDP-alpha-D-mannose: step 1/2. With respect to regulation, inhibited by GDP-fucose. Its function is as follows. Catalyzes the conversion of GDP-D-mannose to GDP-4-dehydro-6-deoxy-D-mannose. The chain is GDP-mannose 4,6 dehydratase (GMDS) from Cricetulus griseus (Chinese hamster).